A 101-amino-acid polypeptide reads, in one-letter code: Urease subunit beta (101 aa).

It belongs to the urease beta subunit family. Heterotrimer of UreA (gamma), UreB (beta) and UreC (alpha) subunits. Three heterotrimers associate to form the active enzyme.

The protein localises to the cytoplasm. It catalyses the reaction urea + 2 H2O + H(+) = hydrogencarbonate + 2 NH4(+). It participates in nitrogen metabolism; urea degradation; CO(2) and NH(3) from urea (urease route): step 1/1. The sequence is that of Urease subunit beta from Pseudomonas fluorescens (strain SBW25).